We begin with the raw amino-acid sequence, 353 residues long: Phosphoribosylformylglycinamidine cyclo-ligase (353 aa).

The protein belongs to the AIR synthase family.

It is found in the cytoplasm. The enzyme catalyses 2-formamido-N(1)-(5-O-phospho-beta-D-ribosyl)acetamidine + ATP = 5-amino-1-(5-phospho-beta-D-ribosyl)imidazole + ADP + phosphate + H(+). The protein operates within purine metabolism; IMP biosynthesis via de novo pathway; 5-amino-1-(5-phospho-D-ribosyl)imidazole from N(2)-formyl-N(1)-(5-phospho-D-ribosyl)glycinamide: step 2/2. This chain is Phosphoribosylformylglycinamidine cyclo-ligase, found in Dinoroseobacter shibae (strain DSM 16493 / NCIMB 14021 / DFL 12).